The following is a 325-amino-acid chain: Tetraacyldisaccharide 4'-kinase (325 aa).

Position 53-60 (53-60) interacts with ATP; the sequence is SVGGNGKT.

It belongs to the LpxK family.

The enzyme catalyses a lipid A disaccharide + ATP = a lipid IVA + ADP + H(+). It participates in glycolipid biosynthesis; lipid IV(A) biosynthesis; lipid IV(A) from (3R)-3-hydroxytetradecanoyl-[acyl-carrier-protein] and UDP-N-acetyl-alpha-D-glucosamine: step 6/6. Transfers the gamma-phosphate of ATP to the 4'-position of a tetraacyldisaccharide 1-phosphate intermediate (termed DS-1-P) to form tetraacyldisaccharide 1,4'-bis-phosphate (lipid IVA). In Actinobacillus succinogenes (strain ATCC 55618 / DSM 22257 / CCUG 43843 / 130Z), this protein is Tetraacyldisaccharide 4'-kinase.